We begin with the raw amino-acid sequence, 246 residues long: Large ribosomal subunit protein uL4 (246 aa).

Residues 37–103 (AAQANRKQDY…TEKDRSLDLN (67 aa)) form a disordered region. Residues 92 to 103 (PKTEKDRSLDLN) show a composition bias toward basic and acidic residues.

This sequence belongs to the universal ribosomal protein uL4 family. As to quaternary structure, part of the 50S ribosomal subunit. Interacts weakly with proteins L18e, L24 and L37e. Has been cross-linked to L18e.

Its function is as follows. One of the primary rRNA binding proteins, this protein initially binds near the 5'-end of the 23S rRNA. It is important during the early stages of 50S assembly. Makes multiple contacts with different domains of the 23S rRNA in the assembled 50S subunit. In terms of biological role, forms part of the polypeptide exit tunnel, in which it helps forms a bend with protein L22. Contacts the macrolide antibiotic spiramycin in the polypeptide exit tunnel. The protein is Large ribosomal subunit protein uL4 (rpl4) of Haloarcula marismortui (strain ATCC 43049 / DSM 3752 / JCM 8966 / VKM B-1809) (Halobacterium marismortui).